A 671-amino-acid chain; its full sequence is Alpha-1,4-glucan:maltose-1-phosphate maltosyltransferase (671 aa).

Alpha-maltose 1-phosphate is bound by residues Lys252, Gln312, and Asp347. Asp382 acts as the Nucleophile in catalysis. Asn383 contacts alpha-maltose 1-phosphate. Residue Glu411 is the Proton donor of the active site. An alpha-maltose 1-phosphate-binding site is contributed by Lys521–Tyr522.

This sequence belongs to the glycosyl hydrolase 13 family. GlgE subfamily. Homodimer.

The enzyme catalyses alpha-maltose 1-phosphate + [(1-&gt;4)-alpha-D-glucosyl](n) = [(1-&gt;4)-alpha-D-glucosyl](n+2) + phosphate. In terms of biological role, maltosyltransferase that uses maltose 1-phosphate (M1P) as the sugar donor to elongate linear or branched alpha-(1-&gt;4)-glucans. Is involved in a branched alpha-glucan biosynthetic pathway from trehalose, together with TreS, Mak and GlgB. The protein is Alpha-1,4-glucan:maltose-1-phosphate maltosyltransferase of Corynebacterium pseudotuberculosis (strain 1002).